Reading from the N-terminus, the 360-residue chain is Photosystem II protein D1 (360 aa).

The next 3 membrane-spanning stretches (helical) occupy residues 29 to 46 (YIGW…TATS), 118 to 133 (HFLL…EWEL), and 142 to 156 (WIFV…AASA). Histidine 118 provides a ligand contact to chlorophyll a. Tyrosine 126 is a binding site for pheophytin a. [CaMn4O5] cluster contacts are provided by aspartate 170 and glutamate 189. A helical membrane pass occupies residues 197 to 218 (FHMAGVAGVFGGSLFSAMHGSL). Histidine 198 contributes to the chlorophyll a binding site. A quinone contacts are provided by residues histidine 215 and 264–265 (SF). Histidine 215 serves as a coordination point for Fe cation. Histidine 272 serves as a coordination point for Fe cation. A helical membrane pass occupies residues 274 to 288 (FLALWPVLGIWLTAM). Residues histidine 332, glutamate 333, aspartate 342, and alanine 344 each coordinate [CaMn4O5] cluster. Positions 345–360 (SGDVLPVAFTAPAVNA) are excised as a propeptide.

This sequence belongs to the reaction center PufL/M/PsbA/D family. PSII is composed of 1 copy each of membrane proteins PsbA, PsbB, PsbC, PsbD, PsbE, PsbF, PsbH, PsbI, PsbJ, PsbK, PsbL, PsbM, PsbT, PsbX, PsbY, PsbZ, Psb30/Ycf12, at least 3 peripheral proteins of the oxygen-evolving complex and a large number of cofactors. It forms dimeric complexes. The D1/D2 heterodimer binds P680, chlorophylls that are the primary electron donor of PSII, and subsequent electron acceptors. It shares a non-heme iron and each subunit binds pheophytin, quinone, additional chlorophylls, carotenoids and lipids. D1 provides most of the ligands for the Mn4-Ca-O5 cluster of the oxygen-evolving complex (OEC). There is also a Cl(-1) ion associated with D1 and D2, which is required for oxygen evolution. The PSII complex binds additional chlorophylls, carotenoids and specific lipids. serves as cofactor. Tyr-161 forms a radical intermediate that is referred to as redox-active TyrZ, YZ or Y-Z. Post-translationally, C-terminally processed by CTPA; processing is essential to allow assembly of the oxygen-evolving complex and thus photosynthetic growth.

It localises to the plastid. It is found in the chloroplast thylakoid membrane. It carries out the reaction 2 a plastoquinone + 4 hnu + 2 H2O = 2 a plastoquinol + O2. Its function is as follows. Photosystem II (PSII) is a light-driven water:plastoquinone oxidoreductase that uses light energy to abstract electrons from H(2)O, generating O(2) and a proton gradient subsequently used for ATP formation. It consists of a core antenna complex that captures photons, and an electron transfer chain that converts photonic excitation into a charge separation. The D1/D2 (PsbA/PsbD) reaction center heterodimer binds P680, the primary electron donor of PSII as well as several subsequent electron acceptors. The polypeptide is Photosystem II protein D1 (Thalassiosira pseudonana (Marine diatom)).